The following is a 91-amino-acid chain: Uteroglobin (91 aa).

A signal peptide spans 1 to 21 (MKLTIAIVLVTLTLFCRPAST).

The protein belongs to the secretoglobin family. In terms of assembly, antiparallel homodimer; disulfide-linked. Interaction with LMBR1L is controversial.

The protein resides in the secreted. Functionally, binds phosphatidylcholine, phosphatidylinositol, polychlorinated biphenyls (PCB) and weakly progesterone, potent inhibitor of phospholipase A2. The chain is Uteroglobin (SCGB1A1) from Bos taurus (Bovine).